The sequence spans 223 residues: Endonuclease V (223 aa).

Mg(2+) contacts are provided by Asp-35 and Asp-103.

It belongs to the endonuclease V family. Requires Mg(2+) as cofactor.

It localises to the cytoplasm. It carries out the reaction Endonucleolytic cleavage at apurinic or apyrimidinic sites to products with a 5'-phosphate.. DNA repair enzyme involved in the repair of deaminated bases. Selectively cleaves double-stranded DNA at the second phosphodiester bond 3' to a deoxyinosine leaving behind the intact lesion on the nicked DNA. In Shigella flexneri serotype 5b (strain 8401), this protein is Endonuclease V.